Reading from the N-terminus, the 1413-residue chain is DNA-directed RNA polymerase subunit beta' (1413 aa).

Residues C70, C72, C85, and C88 each contribute to the Zn(2+) site. 3 residues coordinate Mg(2+): D461, D463, and D465. C820, C894, C901, and C904 together coordinate Zn(2+).

Belongs to the RNA polymerase beta' chain family. The RNAP catalytic core consists of 2 alpha, 1 beta, 1 beta' and 1 omega subunit. When a sigma factor is associated with the core the holoenzyme is formed, which can initiate transcription. Requires Mg(2+) as cofactor. Zn(2+) serves as cofactor.

The enzyme catalyses RNA(n) + a ribonucleoside 5'-triphosphate = RNA(n+1) + diphosphate. Functionally, DNA-dependent RNA polymerase catalyzes the transcription of DNA into RNA using the four ribonucleoside triphosphates as substrates. The polypeptide is DNA-directed RNA polymerase subunit beta' (Cupriavidus metallidurans (strain ATCC 43123 / DSM 2839 / NBRC 102507 / CH34) (Ralstonia metallidurans)).